A 661-amino-acid polypeptide reads, in one-letter code: UvrABC system protein B (661 aa).

The Helicase ATP-binding domain maps to 28 to 414; the sequence is DGVNERKRHQ…HTDEMVEQII (387 aa). 41–48 lines the ATP pocket; the sequence is GATGTGKT. A Beta-hairpin motif is present at residues 94 to 117; the sequence is YYDYYQPEAYVPSTDTFIEKDASI. One can recognise a Helicase C-terminal domain in the interval 432–598; the sequence is QIDDLLSEIQ…TINKKIHDVI (167 aa). Residues 603-624 are disordered; the sequence is ESDETNQQQQTELPKKMTKKER. The region spanning 625-660 is the UVR domain; sequence QKTIENIEKEMKKAAKDLDFEKATELRDMLFELKAE.

It belongs to the UvrB family. In terms of assembly, forms a heterotetramer with UvrA during the search for lesions. Interacts with UvrC in an incision complex.

It is found in the cytoplasm. In terms of biological role, the UvrABC repair system catalyzes the recognition and processing of DNA lesions. A damage recognition complex composed of 2 UvrA and 2 UvrB subunits scans DNA for abnormalities. Upon binding of the UvrA(2)B(2) complex to a putative damaged site, the DNA wraps around one UvrB monomer. DNA wrap is dependent on ATP binding by UvrB and probably causes local melting of the DNA helix, facilitating insertion of UvrB beta-hairpin between the DNA strands. Then UvrB probes one DNA strand for the presence of a lesion. If a lesion is found the UvrA subunits dissociate and the UvrB-DNA preincision complex is formed. This complex is subsequently bound by UvrC and the second UvrB is released. If no lesion is found, the DNA wraps around the other UvrB subunit that will check the other stand for damage. In Staphylococcus epidermidis (strain ATCC 12228 / FDA PCI 1200), this protein is UvrABC system protein B.